The sequence spans 238 residues: 14-3-3 family protein artA (238 aa).

The protein belongs to the 14-3-3 family.

14-3-3 family protein that plays a role in the morphological differentiation and secondary metabolism biosynthesis. Required for normal fungal morphogenesis in an environment-dependent manner, affecting the balance between production of conidiophores and the formation of sclerotia, resistant structures that are necessary for the dissemination and survival. Acts as a positive regulator of conidiation and a negative regulator of sclerotial production. Also regulates the production of secondary metabolites such as aflatoxin, but also the indole-tetramic acid mycotoxin cyclopiazonic acid (CPA) and ustiloxin, an inhibitor of microtubule assembly. This chain is 14-3-3 family protein artA, found in Aspergillus flavus (strain ATCC 200026 / FGSC A1120 / IAM 13836 / NRRL 3357 / JCM 12722 / SRRC 167).